The sequence spans 122 residues: Serum amyloid A-2 protein (122 aa).

The signal sequence occupies residues 1-18 (MKPFLSIIFCFLVLGVDS). Q19 bears the Pyrrolidone carboxylic acid mark. The interval 100 to 122 (ANEWGRSGKDPNFFRPPGLPSKY) is disordered.

It belongs to the SAA family. As to quaternary structure, apolipoprotein of the HDL complex. Expressed by the liver; secreted in plasma.

It is found in the secreted. In terms of biological role, major acute phase reactant. The polypeptide is Serum amyloid A-2 protein (SAA2) (Mesocricetus auratus (Golden hamster)).